The chain runs to 320 residues: Ferrochelatase (320 aa).

Residues histidine 194 and glutamate 275 each contribute to the Fe cation site.

The protein belongs to the ferrochelatase family. As to quaternary structure, monomer.

It is found in the cytoplasm. The enzyme catalyses heme b + 2 H(+) = protoporphyrin IX + Fe(2+). It functions in the pathway porphyrin-containing compound metabolism; protoheme biosynthesis; protoheme from protoporphyrin-IX: step 1/1. In terms of biological role, catalyzes the ferrous insertion into protoporphyrin IX. This chain is Ferrochelatase, found in Salmonella arizonae (strain ATCC BAA-731 / CDC346-86 / RSK2980).